The following is a 466-amino-acid chain: Purple acid phosphatase 25 (466 aa).

The N-terminal stretch at 1 to 21 (MRMNKILLVFVFLSIATVINS) is a signal peptide. Asp164 provides a ligand contact to Fe cation. N-linked (GlcNAc...) asparagine glycosylation is present at Asn172. The Fe cation site is built by Asp192 and Tyr195. Position 192 (Asp192) interacts with Zn(2+). The Zn(2+) site is built by Asn229 and His314. A substrate-binding site is contributed by Asn229. His324 functions as the Proton donor in the catalytic mechanism. Residue His351 coordinates Zn(2+). Substrate is bound at residue 351–353 (HVH). Fe cation is bound at residue His353. Residues Asn367 and Asn424 are each glycosylated (N-linked (GlcNAc...) asparagine).

The protein belongs to the metallophosphoesterase superfamily. Purple acid phosphatase family. In terms of assembly, homodimer. The cofactor is Fe cation. Zn(2+) is required as a cofactor. In terms of tissue distribution, specifically expressed in flowers.

It localises to the secreted. It carries out the reaction a phosphate monoester + H2O = an alcohol + phosphate. The chain is Purple acid phosphatase 25 (PAP25) from Arabidopsis thaliana (Mouse-ear cress).